The chain runs to 406 residues: 8-amino-7-oxononanoate synthase (406 aa).

A substrate-binding site is contributed by Arg-20. 116 to 117 (GY) provides a ligand contact to pyridoxal 5'-phosphate. Position 141 (His-141) interacts with substrate. Pyridoxal 5'-phosphate is bound by residues Ser-187, His-215, and Thr-243. Residue Lys-246 is modified to N6-(pyridoxal phosphate)lysine. Residue Thr-366 coordinates substrate.

It belongs to the class-II pyridoxal-phosphate-dependent aminotransferase family. BioF subfamily. As to quaternary structure, homodimer. Pyridoxal 5'-phosphate serves as cofactor.

It catalyses the reaction 6-carboxyhexanoyl-[ACP] + L-alanine + H(+) = (8S)-8-amino-7-oxononanoate + holo-[ACP] + CO2. Its pathway is cofactor biosynthesis; biotin biosynthesis. Functionally, catalyzes the decarboxylative condensation of pimeloyl-[acyl-carrier protein] and L-alanine to produce 8-amino-7-oxononanoate (AON), [acyl-carrier protein], and carbon dioxide. In Cupriavidus metallidurans (strain ATCC 43123 / DSM 2839 / NBRC 102507 / CH34) (Ralstonia metallidurans), this protein is 8-amino-7-oxononanoate synthase.